The primary structure comprises 415 residues: Dihydroorotase (415 aa).

Residues His-54 and His-56 each coordinate Zn(2+). Residues 56–58 and Asn-88 contribute to the substrate site; that span reads HFR. Residues Lys-136, His-169, His-217, and Asp-278 each contribute to the Zn(2+) site. An N6-carboxylysine modification is found at Lys-136. Asp-278 is a catalytic residue. A substrate-binding site is contributed by His-282.

This sequence belongs to the metallo-dependent hydrolases superfamily. DHOase family. Class I DHOase subfamily. It depends on Zn(2+) as a cofactor.

It carries out the reaction (S)-dihydroorotate + H2O = N-carbamoyl-L-aspartate + H(+). It participates in pyrimidine metabolism; UMP biosynthesis via de novo pathway; (S)-dihydroorotate from bicarbonate: step 3/3. Its function is as follows. Catalyzes the reversible cyclization of carbamoyl aspartate to dihydroorotate. This Thermoplasma volcanium (strain ATCC 51530 / DSM 4299 / JCM 9571 / NBRC 15438 / GSS1) protein is Dihydroorotase.